A 983-amino-acid polypeptide reads, in one-letter code: Receptor-type tyrosine-protein phosphatase-like N (983 aa).

A signal peptide spans 1-40 (MRRPRRPGGPAGCGGSEGSGGLRLLVCLLLLSGRPGGCSA). Positions 41–137 (ISAHGCLFDR…HPRDRSGSVP (97 aa)) are RESP18 homology domain. Topologically, residues 41 to 579 (ISAHGCLFDR…RQAHGISPMR (539 aa)) are lumenal. A disulfide bond links C59 and C68. The span at 118–133 (RIPRLRPPEPHPRDRS) shows a compositional bias: basic and acidic residues. 3 disordered regions span residues 118 to 179 (RIPR…SPLS), 293 to 330 (RARA…SPPQ), and 399 to 420 (GDTA…ASST). The span at 148–158 (SQGNPTGSSPA) shows a compositional bias: polar residues. The span at 307 to 326 (RAEDSSEGHEEEVLGGHGEK) shows a compositional bias: basic and acidic residues. Phosphoserine is present on residues S311 and S312. The sufficient for dimerization of proICA512 stretch occupies residues 453-579 (SPLGQSQPTV…RQAHGISPMR (127 aa)). Residues N510 and N528 are each glycosylated (N-linked (GlcNAc...) asparagine). Residues 580–604 (SLLLTLVALAGVAGLLVALAVALCM) traverse the membrane as a helical segment. The tract at residues 605–736 (RHHSKQRDKE…PNTCATAQGE (132 aa)) is sufficient for dimerization of proICA512. Topologically, residues 605-983 (RHHSKQRDKE…VNAILKALPQ (379 aa)) are cytoplasmic. The interval 648-684 (RAEGQPEPSRVSSVSSQFSDAAQASPSSHSSTPSWCE) is disordered. Low complexity predominate over residues 652 to 681 (QPEPSRVSSVSSQFSDAAQASPSSHSSTPS). Positions 713 to 973 (LAKEWQALCA…EFALTAVAEE (261 aa)) constitute a Tyrosine-protein phosphatase domain. A Glycyl lysine isopeptide (Lys-Gly) (interchain with G-Cter in SUMO) cross-link involves residue K758.

The protein belongs to the protein-tyrosine phosphatase family. Receptor class 8 subfamily. As to quaternary structure, homodimer; shown for the unprocessed protein (proICA512) in the endoplasmic reticulum and resolved during protein maturation as ICA512-TMF seems to be predominantly monomeric in secretory granules; however, ICA512-CCF interacts with ICA512-TMF disrupting the ICA512-TMF:SNTB2 complex. The isolated lumenal RESP18 homology domain has been shown to form disulfide-linked homooligomers. Interacts (via cytoplasmic domain) with phosphorylated SNTB2; this protects PTPRN against cleavage by CAPN1 to produce ICA512-CCF. Dephosphorylation of SNTB2 upon insulin stimulation disrupts the interaction and results in PTPRN cleavage. Interacts with SNX19. ICA512-CCF interacts with PIAS4; in the nucleus. Interacts with STAT5B (phosphorylated); down-regulated by ICA512-CCF sumoylation; ICA512-CCF prevents STAT5B dephosphorylation; ICA512-CCF mediates interaction of STAT5B with PIAS4. Interacts (via RESP18 homology domain) with insulin and proinsulin. Interacts with PTPRN2, PTPRA and PTPRE. Post-translationally, subject to proteolytic cleavage at multiple sites. Subject to cleavage on a pair of basic residues. Following exocytosis of secretory granules in pancreatic beta-cells ICA512-TMF located in the plasma-membrane is cleaved by mu-type calpain CPN1 to yield ICA512-CCF. In terms of processing, N-glycosylated. O-glycosylated. Post-translationally, sumoylated at two sites including Lys-758. Sumoylation decreases interaction with STAT5. Detected in pancreas islets. Detected in pancreas alpha, beta and delta cells, and in chromaffin cells in the adrenal medulla. Detected in amygdala, hypothalamus, autonomous nerve fibers and ganglia, especially at synaptic contacts. Detected in pituitary (at protein level). Detected in brain, specifically in cerebral cortex, diencephalon and brain stem.

The protein resides in the membrane. Its subcellular location is the cytoplasmic vesicle. It localises to the secretory vesicle membrane. The protein localises to the perikaryon. It is found in the cell projection. The protein resides in the axon. Its subcellular location is the synapse. It localises to the cell membrane. The protein localises to the endosome. It is found in the nucleus. Functionally, plays a role in vesicle-mediated secretory processes. Required for normal accumulation of secretory vesicles in hippocampus, pituitary and pancreatic islets. Required for the accumulation of normal levels of insulin-containing vesicles and preventing their degradation. Plays a role in insulin secretion in response to glucose stimuli. Required for normal accumulation of the neurotransmitters norepinephrine, dopamine and serotonin in the brain. In females, but not in males, required for normal accumulation and secretion of pituitary hormones, such as luteinizing hormone (LH) and follicle-stimulating hormone (FSH). Required to maintain normal levels of renin expression and renin release. Seems to lack intrinsic enzyme activity. ICA512-TMF regulates dynamics and exocytosis of insulin secretory granules (SGs); binding of ICA512-TMF to SNTB2/beta-2-syntrophin is proposed to restrain SGs mobility and exocytosis by tethering them to the actin cytoskeleton depending on UTRN; the function is inhibited by cytoplasmic ICA512-CFF dimerizing with ICA512-TMF and displacing SNTB2. In terms of biological role, ICA512-CCF translocated to the nucleus promotes expression of insulin and other granule-related genes; the function implicates binding to and regulating activity of STAT5B probably by preventing its dephosphorylation and potentially by inducing its sumoylation by recruiting PIAS4. Enhances pancreatic beta-cell proliferation by converging with signaling by STAT5B and STAT3. ICA512-CCF located in the cytoplasm regulates dynamics and exocytosis of insulin secretory granules (SGs) by dimerizing with ICA512-TMF and displacing SNTB2 thus enhancing SGs mobility and exocytosis. This Rattus norvegicus (Rat) protein is Receptor-type tyrosine-protein phosphatase-like N (Ptprn).